The following is a 162-amino-acid chain: Putative 4-hydroxy-4-methyl-2-oxoglutarate aldolase (162 aa).

Substrate-binding positions include 75–78 (GDML) and Arg97. Asp98 serves as a coordination point for a divalent metal cation.

Belongs to the class II aldolase/RraA-like family. Homotrimer. The cofactor is a divalent metal cation.

It catalyses the reaction 4-hydroxy-4-methyl-2-oxoglutarate = 2 pyruvate. It carries out the reaction oxaloacetate + H(+) = pyruvate + CO2. Functionally, catalyzes the aldol cleavage of 4-hydroxy-4-methyl-2-oxoglutarate (HMG) into 2 molecules of pyruvate. Also contains a secondary oxaloacetate (OAA) decarboxylase activity due to the common pyruvate enolate transition state formed following C-C bond cleavage in the retro-aldol and decarboxylation reactions. This is Putative 4-hydroxy-4-methyl-2-oxoglutarate aldolase from Azotobacter vinelandii (strain DJ / ATCC BAA-1303).